The following is an 857-amino-acid chain: MERNSVKFHAEKRSGAFDPGSGFGSSKRVKTHHTQLLSALVVPVGHAAFRLLCPLSHVGAVIGKSGNVIKQLQQSTGAKIRVEEPPSGSPDRVITIIAQADSKSRVKLGANNNGNAEGEKKEEEVEVSKAQGALIKVFELLAAEADSDTVVCRLLTESSHAGAVIGKGGQMVGSIRKETGCKISIRIENLPICADTDDEMVEVEGNAIAVKKALVSISRCLQNCQSIDKVRMVGNRPLEKEFQASLHRPIETIIQESLPRSVEVNPYDYRLRNDEIFPRGTVARANDVIPHDTLHLRRIEAVPQGALRMHIEADRQDVLRRHVEADRQDALRRRIDVVPQETLYMPSDVLRGDCFRQHRERDDSHDSLHRPFEMVPRDAMGMPFESFPRDAYGRPIETMTQETLRGQSADYLAHRYSTLDTHPHSFTTSASMANTATMKPPPSEVEVGNQDVVFKILCSTENAGGVIGTGGKVVRMLHSETGAFINVGNTLDDCEERLIAVTASENPECQSSPAQKAIMLIFSRLFELATNKILDNGPRSSITARLVVPTSQIGCVLGKGGVIVSEMRKTTGAAIQILKVEQNPKCISENDQVVQITGEFPNVREAIFHITSRLRDSVFSNSMKNSLAKSSSALTTERFYDRQSDNPLSIGSHQSVSNPATNSSSLHRRSEDSFLSGSHSSVNYSRSVGTDPYIRPEDPFPDRFNPSAGYSHNFGRRFTMDHSDNSHHLTEAPSRLWASPPPAAPRGLSDASGGLSSARAGHVLGSGHKSAIVTNTTVEIRVPANAMSFVYGEQGYNLEQLRQISGARVIIHEPPLGTSDRIIVISGTPDQTQAAQNLLHAFILTGETSLSKKYNLN.

The segment covering 1–15 (MERNSVKFHAEKRSG) has biased composition (basic and acidic residues). The tract at residues 1-27 (MERNSVKFHAEKRSGAFDPGSGFGSSK) is disordered. 4 KH domains span residues 46 to 110 (HAAF…KLGA), 149 to 217 (TVVC…LVSI), 451 to 521 (DVVF…IMLI), and 541 to 610 (SITA…IFHI). The tract at residues 644–755 (SDNPLSIGSH…RGLSDASGGL (112 aa)) is disordered. 2 stretches are compositionally biased toward polar residues: residues 645–665 (DNPL…NSSS) and 673–688 (SFLS…SRSV). Positions 718–730 (FTMDHSDNSHHLT) are enriched in basic and acidic residues. A compositionally biased stretch (low complexity) spans 746–755 (RGLSDASGGL). Positions 775-839 (NTTVEIRVPA…DQTQAAQNLL (65 aa)) constitute a KH 5 domain.

In terms of assembly, interacts with HUA1. Interacts with FLK and PEP.

Its subcellular location is the nucleus speckle. Its function is as follows. Functions in floral reproductive organ identity in the third whorl and floral determinacy specification by specifically promoting the processing of AGAMOUS (AG) pre-mRNA. Functions in association with HUA1 and HUA2. The polypeptide is KH domain-containing protein HEN4 (Arabidopsis thaliana (Mouse-ear cress)).